A 522-amino-acid chain; its full sequence is Glutamate--cysteine ligase (522 aa).

Belongs to the glutamate--cysteine ligase type 1 family. Type 1 subfamily.

The enzyme catalyses L-cysteine + L-glutamate + ATP = gamma-L-glutamyl-L-cysteine + ADP + phosphate + H(+). It functions in the pathway sulfur metabolism; glutathione biosynthesis; glutathione from L-cysteine and L-glutamate: step 1/2. In Vibrio campbellii (strain ATCC BAA-1116), this protein is Glutamate--cysteine ligase.